Consider the following 113-residue polypeptide: Small ribosomal subunit protein uS17 (113 aa).

It belongs to the universal ribosomal protein uS17 family. Part of the 30S ribosomal subunit.

In terms of biological role, one of the primary rRNA binding proteins, it binds specifically to the 5'-end of 16S ribosomal RNA. This is Small ribosomal subunit protein uS17 from Pyrococcus furiosus (strain ATCC 43587 / DSM 3638 / JCM 8422 / Vc1).